A 453-amino-acid polypeptide reads, in one-letter code: Plasmepsin II (453 aa).

Residues Met1–Lys37 lie on the Cytoplasmic side of the membrane. Residues Met1–Gly124 constitute a propeptide that is removed on maturation. Residues Gly38–Val58 form a helical; Signal-anchor for type II membrane protein membrane-spanning segment. At Tyr59–Leu453 the chain is on the lumenal side. The Peptidase A1 domain occupies Phe140–Ala447. The active site involves Asp158. Cys171 and Cys176 are oxidised to a cystine. The active site involves Asp338. A disulfide bridge links Cys373 with Cys409.

This sequence belongs to the peptidase A1 family. Component of the hemozoin formation complex (HFC) composed of falcipains FP2A and/or FP2B, plasmepsins PMII, PMIII/HAP and PMIV, heme detoxifying protein HDP and falcilysin FLN. The HFC complex is involved in hemoglobin degradation and detoxification of heme in the food vacuole during the asexual blood stage. Not N-glycosylated. In terms of processing, proteolytically cleaved into the soluble active mature form in the digestive vacuole by cysteine protease falcipains; the process begins at the early ring stage. Proteolysis requires an acidic environment. In absence of falcipains, autoprocessing may serve as an alternate activation system.

It localises to the membrane. The protein localises to the vacuole lumen. It is found in the vacuole membrane. The enzyme catalyses Hydrolysis of the bonds linking certain hydrophobic residues in hemoglobin or globin. Also cleaves small molecules substrates such as Ala-Leu-Glu-Arg-Thr-Phe-|-Phe(NO2)-Ser-Phe-Pro-Thr.. Inhibited by pepstatin A. Inhibited by KNI derived compounds (KNI-10742, 10743, 10395, 10333, and 10343). Functionally, during the asexual blood stage, participates in initial cleavage of native host hemoglobin (Hb) resulting in Hb denaturation. May cleave preferentially denatured hemoglobin that has been cleaved by PMI. Digestion of host Hb is an essential step which provides the parasite with amino acids for protein synthesis, and regulates osmolarity. In Plasmodium falciparum (isolate 3D7), this protein is Plasmepsin II.